A 312-amino-acid polypeptide reads, in one-letter code: Methionyl-tRNA formyltransferase (312 aa).

A (6S)-5,6,7,8-tetrahydrofolate-binding site is contributed by 110–113; it reads SLLP.

Belongs to the Fmt family.

It carries out the reaction L-methionyl-tRNA(fMet) + (6R)-10-formyltetrahydrofolate = N-formyl-L-methionyl-tRNA(fMet) + (6S)-5,6,7,8-tetrahydrofolate + H(+). Attaches a formyl group to the free amino group of methionyl-tRNA(fMet). The formyl group appears to play a dual role in the initiator identity of N-formylmethionyl-tRNA by promoting its recognition by IF2 and preventing the misappropriation of this tRNA by the elongation apparatus. In Mycobacterium marinum (strain ATCC BAA-535 / M), this protein is Methionyl-tRNA formyltransferase.